A 269-amino-acid chain; its full sequence is MEMO1 family protein TV1383 (269 aa).

This sequence belongs to the MEMO1 family.

The polypeptide is MEMO1 family protein TV1383 (Thermoplasma volcanium (strain ATCC 51530 / DSM 4299 / JCM 9571 / NBRC 15438 / GSS1)).